The sequence spans 380 residues: Cytochrome b (380 aa).

The next 4 membrane-spanning stretches (helical) occupy residues 34–54, 78–99, 114–134, and 179–199; these read FGSLLGICLATQILTGLLLAA, WLIRNLHANGASFFFICIYLHI, WNTGVILLLTLMATAFVGYVL, and FFTLHFLLPFMIMGLTLIHLT. Heme b contacts are provided by histidine 84 and histidine 98. 2 residues coordinate heme b: histidine 183 and histidine 197. A ubiquinone is bound at residue histidine 202. A run of 4 helical transmembrane segments spans residues 227-247, 289-309, 321-341, and 348-368; these read LKDILGFMLMLFPLMTLALFS, LGGVLALAASVLILFLAPLLH, FSQLLFWTLAANLLILTWVGS, and FIIIGQLASLTYFTILLILFP.

The protein belongs to the cytochrome b family. As to quaternary structure, the cytochrome bc1 complex contains 11 subunits: 3 respiratory subunits (MT-CYB, CYC1 and UQCRFS1), 2 core proteins (UQCRC1 and UQCRC2) and 6 low-molecular weight proteins (UQCRH/QCR6, UQCRB/QCR7, UQCRQ/QCR8, UQCR10/QCR9, UQCR11/QCR10 and a cleavage product of UQCRFS1). This cytochrome bc1 complex then forms a dimer. Heme b serves as cofactor.

It is found in the mitochondrion inner membrane. Component of the ubiquinol-cytochrome c reductase complex (complex III or cytochrome b-c1 complex) that is part of the mitochondrial respiratory chain. The b-c1 complex mediates electron transfer from ubiquinol to cytochrome c. Contributes to the generation of a proton gradient across the mitochondrial membrane that is then used for ATP synthesis. This is Cytochrome b (MT-CYB) from Antigone vipio (White-naped crane).